The following is an 845-amino-acid chain: Translation initiation factor IF-2 (845 aa).

Disordered regions lie at residues 45-91 and 127-209; these read RRKI…SNLS and EESL…TPKV. Over residues 81 to 91 the composition is skewed to polar residues; that stretch reads SESSMAKSNLS. A compositionally biased stretch (basic and acidic residues) spans 137-149; it reads TEIHQEEQKEEKN. Residues 151–162 are compositionally biased toward polar residues; that stretch reads PVQTSPLSSAHS. Residues 179-193 show a composition bias toward basic and acidic residues; that stretch reads TEKRKADEIKNDDRH. Residues 343–512 enclose the tr-type G domain; it reads PRPPVVTIMG…LLQAELLDLK (170 aa). The interval 352–359 is G1; that stretch reads GHVDHGKT. Position 352-359 (352-359) interacts with GTP; the sequence is GHVDHGKT. A G2 region spans residues 377–381; that stretch reads GITQH. Positions 398-401 are G3; it reads DTPG. GTP contacts are provided by residues 398-402 and 452-455; these read DTPGH and NKID. Residues 452–455 form a G4 region; sequence NKID. The segment at 488 to 490 is G5; it reads SAK.

It belongs to the TRAFAC class translation factor GTPase superfamily. Classic translation factor GTPase family. IF-2 subfamily.

It is found in the cytoplasm. One of the essential components for the initiation of protein synthesis. Protects formylmethionyl-tRNA from spontaneous hydrolysis and promotes its binding to the 30S ribosomal subunits. Also involved in the hydrolysis of GTP during the formation of the 70S ribosomal complex. In Bartonella quintana (strain Toulouse) (Rochalimaea quintana), this protein is Translation initiation factor IF-2.